Consider the following 214-residue polypeptide: Transmembrane emp24 domain-containing protein p24delta10 (214 aa).

Positions 1 to 24 (MFLQSQKLWTMLLILAIWSPISHS) are cleaved as a signal peptide. Residues 25–181 (LHFDLHSGRT…QDLNRSTNTK (157 aa)) are Lumenal-facing. In terms of domain architecture, GOLD spans 34–149 (TKCIAEDIKS…VEVMEFEVKS (116 aa)). The stretch at 164-177 (LRDREEEMQDLNRS) forms a coiled coil. Arg-167 carries the omega-N-methylated arginine modification. Asn-175 is a glycosylation site (N-linked (GlcNAc...) asparagine). The chain crosses the membrane as a helical span at residues 182-202 (MAWLSVLSFFVCIGVAGMQFL). Residues 203–214 (HLKTFFEKKKVI) are Cytoplasmic-facing. The short motif at 207-208 (FF) is the COPII vesicle coat-binding element. The COPI vesicle coat-binding motif lies at 207 to 214 (FFEKKKVI).

Belongs to the EMP24/GP25L family. In terms of assembly, probably oligomerizes with other members of the EMP24/GP25L family. Associates with the COPI vesicle coat (coatomer). Associates with the COPII vesicle coat (coatomer).

The protein localises to the endoplasmic reticulum membrane. The protein resides in the golgi apparatus. It localises to the cis-Golgi network membrane. It is found in the golgi stack membrane. Functionally, involved in vesicular protein trafficking. Mainly functions in the early secretory pathway. Thought to act as cargo receptor at the lumenal side for incorporation of secretory cargo molecules into transport vesicles and to be involved in vesicle coat formation at the cytoplasmic side. This Arabidopsis thaliana (Mouse-ear cress) protein is Transmembrane emp24 domain-containing protein p24delta10.